We begin with the raw amino-acid sequence, 208 residues long: Large ribosomal subunit protein uL4 (208 aa).

Belongs to the universal ribosomal protein uL4 family. In terms of assembly, part of the 50S ribosomal subunit.

Functionally, one of the primary rRNA binding proteins, this protein initially binds near the 5'-end of the 23S rRNA. It is important during the early stages of 50S assembly. It makes multiple contacts with different domains of the 23S rRNA in the assembled 50S subunit and ribosome. In terms of biological role, forms part of the polypeptide exit tunnel. In Solibacter usitatus (strain Ellin6076), this protein is Large ribosomal subunit protein uL4.